The primary structure comprises 545 residues: Cannabidiolic acid synthase-like 2 (545 aa).

Residues 1 to 28 form the signal peptide; sequence MKCSTFCFWYVCKIIFFFLSFNIQISIA. Cys37 and Cys99 are joined by a disulfide. N-linked (GlcNAc...) asparagine glycosylation is found at Asn45, Asn65, Asn89, and Asn168. The FAD-binding PCMH-type domain occupies 77 to 251; it reads TTPKPLVITT…AAWKIRLVAV (175 aa). The segment at residues 114–176 is a cross-link (6-(S-cysteinyl)-8alpha-(pros-histidyl)-FAD (His-Cys)); it reads HDAEGMSYIS…ENLSFPAGYC (63 aa). A substrate-binding site is contributed by His292. 4 N-linked (GlcNAc...) asparagine glycosylation sites follow: Asn297, Asn305, Asn329, and Asn361. Tyr417 serves as a coordination point for substrate. A glycan (N-linked (GlcNAc...) asparagine) is linked at Asn467. Tyr484 serves as the catalytic Proton acceptor. Asn499 carries N-linked (GlcNAc...) asparagine glycosylation.

This sequence belongs to the oxygen-dependent FAD-linked oxidoreductase family. The cofactor is FAD. Post-translationally, the FAD cofactor is bound via a bicovalent 6-S-cysteinyl, 8alpha-N1-histidyl FAD linkage.

The protein resides in the secreted. Functionally, has no cannabidiolic acid synthase activity. The protein is Cannabidiolic acid synthase-like 2 (CBDAS3) of Cannabis sativa (Hemp).